Reading from the N-terminus, the 725-residue chain is Ophiobolin F synthase (725 aa).

The interval 1–322 (MEYKYSTIVD…RYHADAKFNE (322 aa)) is (7Z)-ophiobola-7,19-dien-3-ol synthase. The Mg(2+) site is built by Asp-93 and Asp-97. Asp-93 is a binding site for substrate. The short motif at 93-97 (DDEID) is the DDXXD 1 element. Substrate is bound by residues 182-185 (RCMD), Asn-226, 230-234 (SYEKE), and 313-314 (RY). The NSE/DTE signature appears at 226–234 (NDLFSYEKE). The geranylfarnesyl diphosphate synthase stretch occupies residues 323–725 (LQMLRAEHGV…LRMMLELLKV (403 aa)). The disordered stretch occupies residues 362-388 (GVNGVNGKRKRSGEETADDARTNGNGI). Positions 373–382 (SGEETADDAR) are enriched in basic and acidic residues. 3 residues coordinate isopentenyl diphosphate: Lys-436, Arg-439, and His-468. Residues Asp-475 and Asp-479 each contribute to the Mg(2+) site. The short motif at 475–479 (DDIED) is the DDXXD 2 element. Position 484 (Arg-484) interacts with dimethylallyl diphosphate. Isopentenyl diphosphate is bound at residue Arg-485. Lys-562, Thr-563, Gln-601, Asn-608, Lys-618, and Lys-628 together coordinate dimethylallyl diphosphate.

It in the N-terminal section; belongs to the terpene synthase family. This sequence in the C-terminal section; belongs to the FPP/GGPP synthase family. The cofactor is Mg(2+).

The catalysed reaction is isopentenyl diphosphate + (2E,6E)-farnesyl diphosphate = (2E,6E,10E)-geranylgeranyl diphosphate + diphosphate. It carries out the reaction isopentenyl diphosphate + (2E,6E,10E)-geranylgeranyl diphosphate = (2E,6E,10E,14E)-geranylfarnesyl diphosphate + diphosphate. The enzyme catalyses (2E,6E,10E,14E)-geranylfarnesyl diphosphate + H2O = ophiobolin F + diphosphate. It participates in secondary metabolite biosynthesis; terpenoid biosynthesis. Functionally, bifunctional sesterterpene synthase that converts isopentenyl diphosphate (IPP) and dimethylallyl diphosphate (DMAPP) into ophiobolin F. The C-terminal prenyltransferase (PT) domain of AcldOS converts isopentenyl diphosphate and dimethylallyl diphosphate into geranylfarnesyl diphosphate (GFPP), whereas the N-terminal terpene cyclase (TC) domain catalyzes the cyclization of GFPP to ophiobolin F. The sequence is that of Ophiobolin F synthase from Aspergillus calidoustus.